The primary structure comprises 347 residues: Haptoglobin (347 aa).

Residues 1 to 18 form the signal peptide; it reads MRALGAVVTLLLWGQLFA. A Sushi domain is found at 31 to 88; that stretch reads DSCPKPPEIANGYVEHLVRYRCRQFYRLRAEGDGVYTLNDEKQWVNTVAGEKLPECEA. 4 cysteine pairs are disulfide-bonded: cysteine 52-cysteine 86, cysteine 90-cysteine 207, cysteine 250-cysteine 281, and cysteine 292-cysteine 322. A Peptidase S1 domain is found at 103-345; the sequence is IIGGSMDAKG…LKDWVQETMA (243 aa). Residues asparagine 148, asparagine 182, asparagine 256, and asparagine 264 are each glycosylated (N-linked (GlcNAc...) asparagine). The interval 259-264 is interaction with CD163; the sequence is VPEKKN.

This sequence belongs to the peptidase S1 family. As to quaternary structure, tetramer of two alpha and two beta chains; disulfide-linked. The hemoglobin/haptoglobin complex is composed of a haptoglobin dimer bound to two hemoglobin alpha-beta dimers. Interacts with CD163. Interacts with ERGIC3. As to expression, expressed by the liver and secreted in plasma.

It is found in the secreted. Its function is as follows. As a result of hemolysis, hemoglobin is found to accumulate in the kidney and is secreted in the urine. Haptoglobin captures, and combines with free plasma hemoglobin to allow hepatic recycling of heme iron and to prevent kidney damage. Haptoglobin also acts as an antioxidant, has antibacterial activity and plays a role in modulating many aspects of the acute phase response. Hemoglobin/haptoglobin complexes are rapidly cleared by the macrophage CD163 scavenger receptor expressed on the surface of liver Kupfer cells through an endocytic lysosomal degradation pathway. In Mus musculus (Mouse), this protein is Haptoglobin (Hp).